A 270-amino-acid polypeptide reads, in one-letter code: G-box-binding factor 4 (270 aa).

Residues 1–46 form a disordered region; sequence MASFKLMSSSNSDLSRRNSSSASSSPSIRSSHHLRPNPHADHSRIS. Low complexity predominate over residues 8–29; the sequence is SSSNSDLSRRNSSSASSSPSIR. Ser-27 bears the Phosphoserine mark. Residues 187-250 form the bZIP domain; the sequence is AAQRQKRMIK…YKKLMEVLIP (64 aa). The interval 190 to 208 is basic motif; the sequence is RQKRMIKNRESAARSRERK. A leucine-zipper region spans residues 215–229; it reads LETLAAKLEEENEQL. The disordered stretch occupies residues 250–270; it reads PVDEKPRPPSRPLSRSHSLEW. Positions 261–270 are enriched in low complexity; the sequence is PLSRSHSLEW.

The protein belongs to the bZIP family. DNA-binding heterodimer with GBF2 and GBF3; non DNA-binding homodimer.

The protein resides in the nucleus. Its function is as follows. Binds to the G-box motif (5'-CCACGTGG-3') of the rbcS-1A gene promoter. G-box and G-box-like motifs are cis-acting elements defined in promoters of certain plant genes which are regulated by such diverse stimuli as light-induction or hormone control. The chain is G-box-binding factor 4 (GBF4) from Arabidopsis thaliana (Mouse-ear cress).